Consider the following 628-residue polypeptide: tRNA uridine 5-carboxymethylaminomethyl modification enzyme MnmG (628 aa).

FAD contacts are provided by residues 11-16 (GAGHAG), valine 123, and serine 178. Residue 271 to 285 (GPRYCPSIETKIVTF) coordinates NAD(+). Glutamine 368 contacts FAD.

This sequence belongs to the MnmG family. Homodimer. Heterotetramer of two MnmE and two MnmG subunits. Requires FAD as cofactor.

It is found in the cytoplasm. Its function is as follows. NAD-binding protein involved in the addition of a carboxymethylaminomethyl (cmnm) group at the wobble position (U34) of certain tRNAs, forming tRNA-cmnm(5)s(2)U34. The chain is tRNA uridine 5-carboxymethylaminomethyl modification enzyme MnmG from Bacteroides thetaiotaomicron (strain ATCC 29148 / DSM 2079 / JCM 5827 / CCUG 10774 / NCTC 10582 / VPI-5482 / E50).